The primary structure comprises 310 residues: Nitric oxide synthase-interacting protein homolog (310 aa).

Residues 115–124 (FSAIESTPSR) show a composition bias toward polar residues. The disordered stretch occupies residues 115–141 (FSAIESTPSRTGAVATPRPEVGSLKRQ).

It belongs to the NOSIP family.

Its subcellular location is the cytoplasm. The protein localises to the nucleus. Negatively regulates nitric oxide production by inducing nitric oxide synthase translocation to actin cytoskeleton and inhibiting its enzymatic activity. This Caenorhabditis elegans protein is Nitric oxide synthase-interacting protein homolog.